The sequence spans 227 residues: Fibrillarin-like rRNA/tRNA 2'-O-methyltransferase (227 aa).

Residues 86–87 (TT), 105–106 (EF), 130–131 (DA), and 150–153 (DVAQ) contribute to the S-adenosyl-L-methionine site.

Belongs to the methyltransferase superfamily. Fibrillarin family. Interacts with nop5. Component of box C/D small ribonucleoprotein (sRNP) particles that contain rpl7ae, FlpA and nop5, plus a guide RNA. These sRNP particles form homodimers, giving rise to an asymmetric holoenzyme.

Its function is as follows. Involved in pre-rRNA and tRNA processing. Utilizes the methyl donor S-adenosyl-L-methionine to catalyze the site-specific 2'-hydroxyl methylation of ribose moieties in rRNA and tRNA. Site specificity is provided by a guide RNA that base pairs with the substrate. Methylation occurs at a characteristic distance from the sequence involved in base pairing with the guide RNA. The chain is Fibrillarin-like rRNA/tRNA 2'-O-methyltransferase from Pyrococcus furiosus (strain ATCC 43587 / DSM 3638 / JCM 8422 / Vc1).